The following is a 301-amino-acid chain: Ribonuclease H2 subunit A (301 aa).

At Met-1 the chain carries N-acetylmethionine. In terms of domain architecture, RNase H type-2 spans 28–251; that stretch reads PCVLGVDEAG…AQAILEKEAE (224 aa). Positions 34, 35, and 142 each coordinate a divalent metal cation. A Phosphothreonine modification is found at Thr-217. Residue Ser-258 is modified to Phosphoserine.

This sequence belongs to the RNase HII family. Eukaryotic subfamily. In terms of assembly, the RNase H2 complex is a heterotrimer composed of the catalytic subunit RNASEH2A and the non-catalytic subunits RNASEH2B and RNASEH2C. Mn(2+) is required as a cofactor. It depends on Mg(2+) as a cofactor.

The protein resides in the nucleus. The enzyme catalyses Endonucleolytic cleavage to 5'-phosphomonoester.. In terms of biological role, catalytic subunit of RNase HII, an endonuclease that specifically degrades the RNA of RNA:DNA hybrids. Participates in DNA replication, possibly by mediating the removal of lagging-strand Okazaki fragment RNA primers during DNA replication. Mediates the excision of single ribonucleotides from DNA:RNA duplexes. The polypeptide is Ribonuclease H2 subunit A (Rnaseh2a) (Rattus norvegicus (Rat)).